Reading from the N-terminus, the 459-residue chain is Probable rhamnogalacturonase C (459 aa).

The signal sequence occupies residues Met-1–Ala-18. Residues Asn-36, Asn-64, Asn-77, Asn-140, and Asn-155 are each glycosylated (N-linked (GlcNAc...) asparagine). A disulfide bridge connects residues Cys-39 and Cys-65. The active-site Proton donor is Asp-216. An intrachain disulfide couples Cys-218 to Cys-235. N-linked (GlcNAc...) asparagine glycans are attached at residues Asn-236 and Asn-251. His-290 is a catalytic residue. N-linked (GlcNAc...) asparagine glycosylation is present at Asn-315. An intrachain disulfide couples Cys-337 to Cys-343. Asn-356 carries an N-linked (GlcNAc...) asparagine glycan. An intrachain disulfide couples Cys-365 to Cys-374.

Belongs to the glycosyl hydrolase 28 family.

The protein localises to the secreted. Pectinolytic enzymes consist of four classes of enzymes: pectine lyase, polygalacturonase, pectin methylesterase and rhamnogalacturonase. Hydrolyzes alpha-D-galacturonopyranosyl-(1,2)-alpha-L-rhamnopyranosyl linkages in the backbone of the hairy regions of pectins. In Aspergillus niger (strain ATCC MYA-4892 / CBS 513.88 / FGSC A1513), this protein is Probable rhamnogalacturonase C (rhgC).